A 426-amino-acid chain; its full sequence is Alpha/beta hydrolase pydG (426 aa).

The protein belongs to the AB hydrolase superfamily. Homodimer.

Its pathway is mycotoxin biosynthesis. Functionally, alpha/beta hydrolasee; part of the gene cluster that mediates the biosynthesis of pyrrocidines, fungal natural products containing a macrocyclic para-cyclophane connected to a decahydrofluorene ring system that show potent antibiotic activities toward Gram-negative bacteria. Within the pathway, pydG catalyzes the Knoevenagel condensation that affords the 3-pyrrolin-2-one ring, using as substrate the polyketide-tyrosyl acyl thioester product of pydA. The pathway begins with the PKS-NRPS pydA which, with the help of the trans-enoyl reductase pydC, synthesizes the polyketide-tyrosyl acyl thioester product which can be reductively off-loaded by the terminal reductase (R) domain in pydA. The alpha/beta hydrolase pydG is then required to catalyze the subsequent Knoevenagel condensation that affords the 3-pyrrolin-2-one ring, whereas the four proteins pydB, pydE, pydX and pydZ then function synergistically to form the cyclophane. PydB and the membrane-bound pydX and pydZ are lipid-binding proteins that can sequester and mold the pdyG product into the inverse S-shape. Binding of the medium chain reductase pydE to the complex would trigger the cascade oxidative cyclization. PydY is involved in the Diels-Alder cycloaddition that forms the decahydrofluorene core. Additional non-enzymatic hydroxylation yields pyrrocidine A2 which can be further reduced into pyrrocidine B by an endogenous reductase. This is Alpha/beta hydrolase pydG from Acremonium sp.